The chain runs to 575 residues: uncharacterized protein (575 aa).

It is found in the cytoplasm. It localises to the cytoskeleton. Its subcellular location is the microtubule organizing center. The protein resides in the spindle pole body. This is an uncharacterized protein from Schizosaccharomyces pombe (strain 972 / ATCC 24843) (Fission yeast).